The primary structure comprises 166 residues: Crossover junction endodeoxyribonuclease RuvC (166 aa).

Residues D7, E67, and D140 contribute to the active site. Mg(2+) contacts are provided by D7, E67, and D140.

This sequence belongs to the RuvC family. As to quaternary structure, homodimer which binds Holliday junction (HJ) DNA. The HJ becomes 2-fold symmetrical on binding to RuvC with unstacked arms; it has a different conformation from HJ DNA in complex with RuvA. In the full resolvosome a probable DNA-RuvA(4)-RuvB(12)-RuvC(2) complex forms which resolves the HJ. Mg(2+) is required as a cofactor.

The protein resides in the cytoplasm. It carries out the reaction Endonucleolytic cleavage at a junction such as a reciprocal single-stranded crossover between two homologous DNA duplexes (Holliday junction).. In terms of biological role, the RuvA-RuvB-RuvC complex processes Holliday junction (HJ) DNA during genetic recombination and DNA repair. Endonuclease that resolves HJ intermediates. Cleaves cruciform DNA by making single-stranded nicks across the HJ at symmetrical positions within the homologous arms, yielding a 5'-phosphate and a 3'-hydroxyl group; requires a central core of homology in the junction. The consensus cleavage sequence is 5'-(A/T)TT(C/G)-3'. Cleavage occurs on the 3'-side of the TT dinucleotide at the point of strand exchange. HJ branch migration catalyzed by RuvA-RuvB allows RuvC to scan DNA until it finds its consensus sequence, where it cleaves and resolves the cruciform DNA. The protein is Crossover junction endodeoxyribonuclease RuvC of Ruminiclostridium cellulolyticum (strain ATCC 35319 / DSM 5812 / JCM 6584 / H10) (Clostridium cellulolyticum).